A 273-amino-acid chain; its full sequence is Dermonecrotic toxin LhSicTox-alphaIA2avii (273 aa).

His5 is an active-site residue. Mg(2+) contacts are provided by Glu25 and Asp27. His41 functions as the Nucleophile in the catalytic mechanism. 2 disulfides stabilise this stretch: Cys45/Cys51 and Cys47/Cys190. Asp85 contributes to the Mg(2+) binding site.

The protein belongs to the arthropod phospholipase D family. Class II subfamily. The cofactor is Mg(2+). Expressed by the venom gland.

The protein resides in the secreted. It carries out the reaction an N-(acyl)-sphingosylphosphocholine = an N-(acyl)-sphingosyl-1,3-cyclic phosphate + choline. The catalysed reaction is an N-(acyl)-sphingosylphosphoethanolamine = an N-(acyl)-sphingosyl-1,3-cyclic phosphate + ethanolamine. It catalyses the reaction a 1-acyl-sn-glycero-3-phosphocholine = a 1-acyl-sn-glycero-2,3-cyclic phosphate + choline. The enzyme catalyses a 1-acyl-sn-glycero-3-phosphoethanolamine = a 1-acyl-sn-glycero-2,3-cyclic phosphate + ethanolamine. Dermonecrotic toxins cleave the phosphodiester linkage between the phosphate and headgroup of certain phospholipids (sphingolipid and lysolipid substrates), forming an alcohol (often choline) and a cyclic phosphate. This toxin acts on sphingomyelin (SM). It may also act on ceramide phosphoethanolamine (CPE), lysophosphatidylcholine (LPC) and lysophosphatidylethanolamine (LPE), but not on lysophosphatidylserine (LPS), and lysophosphatidylglycerol (LPG). It acts by transphosphatidylation, releasing exclusively cyclic phosphate products as second products. Induces dermonecrosis, hemolysis, increased vascular permeability, edema, inflammatory response, and platelet aggregation. This chain is Dermonecrotic toxin LhSicTox-alphaIA2avii, found in Loxosceles hirsuta (Recluse spider).